The primary structure comprises 782 residues: Cleavage and polyadenylation specificity factor subunit 2 (782 aa).

Positions K407–D416 are enriched in basic and acidic residues. The disordered stretch occupies residues K407–R449. Residues I417–D430 show a composition bias toward acidic residues. A phosphoserine mark is found at S419, S420, and S423. Residues H439 to R449 show a composition bias toward basic and acidic residues. S660 is subject to Phosphoserine.

It belongs to the metallo-beta-lactamase superfamily. RNA-metabolizing metallo-beta-lactamase-like family. CPSF2/YSH1 subfamily. In terms of assembly, component of the cleavage and polyadenylation specificity factor (CPSF) complex, composed of CPSF1, CPSF2, CPSF3, CPSF4 and FIP1L1. Interacts with CPSF3, CSTF2 and SYMPK. Interacts with ZC3H3.

It localises to the nucleus. Functionally, component of the cleavage and polyadenylation specificity factor (CPSF) complex that play a key role in pre-mRNA 3'-end formation, recognizing the AAUAAA signal sequence and interacting with poly(A) polymerase and other factors to bring about cleavage and poly(A) addition. Involved in the histone 3' end pre-mRNA processing. The protein is Cleavage and polyadenylation specificity factor subunit 2 (CPSF2) of Homo sapiens (Human).